A 294-amino-acid chain; its full sequence is Glutamate-binding protein GluB (294 aa).

Positions 1 to 26 (MSHKRMFTRLAAATSAAVLAGITLTA) are cleaved as a signal peptide. Cys-27 carries N-palmitoyl cysteine lipidation. The S-diacylglycerol cysteine moiety is linked to residue Cys-27.

Belongs to the bacterial solute-binding protein 3 family. As to quaternary structure, the complex is composed of two ATP-binding proteins (GluA), two transmembrane proteins (GluC and GluD) and a solute-binding protein (GluB).

The protein localises to the cell membrane. Its function is as follows. Part of the ABC transporter complex GluABCD involved in glutamate uptake. Binds glutamate with a high affinity. The chain is Glutamate-binding protein GluB from Corynebacterium efficiens (strain DSM 44549 / YS-314 / AJ 12310 / JCM 11189 / NBRC 100395).